The chain runs to 895 residues: Transcription factor SWI6 (895 aa).

The span at 1–45 (MASTVAGNSFVSQQHPGNLHSANLQSQSQGFRRQNSTSSVPSTAS) shows a compositional bias: polar residues. The tract at residues 1–107 (MASTVAGNSF…SDQNVPQQPQ (107 aa)) is disordered. Residues 64–100 (MSSQQSQPPASQQSFSMSQTGSQPQPSQSSFRSYSDQ) are compositionally biased toward low complexity. The 108-residue stretch at 112–219 (IYTAVYSNVE…NRNPDGSVSQ (108 aa)) folds into the HTH APSES-type domain. Residues 143 to 164 (ATQILKVAGVEKGKRTKILEKE) constitute a DNA-binding region (H-T-H motif). Disordered stretches follow at residues 272-293 (ARFD…SFQR) and 323-358 (NMAF…NSFG). ANK repeat units lie at residues 458–488 (QCHT…PFRV) and 607–636 (AGDT…SPHI). Residues 653-684 (SDGAMKTKGDSGGDVENGDVGGSSQKSNESSN) are disordered. A compositionally biased stretch (polar residues) spans 674–684 (GSSQKSNESSN). Residues 698–759 (SANFQEEIKN…VTNLQRAEER (62 aa)) adopt a coiled-coil conformation.

It localises to the nucleus. Its function is as follows. Transcription factor that plays a role downstream of the MCK1-MKK2-MPS1 cascade. Required for hyphal morphogenesis and pathogenicity. Is an important oxidative stress response regulator and plays a positive role in the regulation of extracellular peroxidases. The polypeptide is Transcription factor SWI6 (Pyricularia oryzae (strain 70-15 / ATCC MYA-4617 / FGSC 8958) (Rice blast fungus)).